The chain runs to 902 residues: 3'-5' exonuclease DinG (902 aa).

Positions 8 to 161 constitute an Exonuclease domain; the sequence is VVDLETTGNQ…DEDATTTAKL (154 aa). The Helicase ATP-binding domain occupies 241–496; the sequence is KNVTQSLNLT…KAVDKLEQQR (256 aa). Residue 276 to 283 participates in ATP binding; that stretch reads APLGSGKS. The short motif at 448–451 is the DEAH box element; the sequence is DEAH. The Helicase C-terminal domain maps to 714 to 883; that stretch reads YIVEYITVTQ…HFKQRKGNIK (170 aa).

The protein belongs to the helicase family. DinG subfamily. Type 2 sub-subfamily.

In terms of biological role, 3'-5' exonuclease. The chain is 3'-5' exonuclease DinG from Staphylococcus epidermidis (strain ATCC 35984 / DSM 28319 / BCRC 17069 / CCUG 31568 / BM 3577 / RP62A).